Reading from the N-terminus, the 102-residue chain is Cytochrome b (102 aa).

3 consecutive transmembrane segments (helical) span residues 1-21, 45-66, and 81-101; these read FGSL…FLAM, WLIR…YMHI, and WNIG…GYVF. Positions 51 and 65 each coordinate heme b.

It belongs to the cytochrome b family. The cytochrome bc1 complex contains 3 respiratory subunits (MT-CYB, CYC1 and UQCRFS1), 2 core proteins (UQCRC1 and UQCRC2) and probably 6 low-molecular weight proteins. Heme b is required as a cofactor.

It localises to the mitochondrion inner membrane. Functionally, component of the ubiquinol-cytochrome c reductase complex (complex III or cytochrome b-c1 complex) that is part of the mitochondrial respiratory chain. The b-c1 complex mediates electron transfer from ubiquinol to cytochrome c. Contributes to the generation of a proton gradient across the mitochondrial membrane that is then used for ATP synthesis. The sequence is that of Cytochrome b (mt-cyb) from Plethodon yonahlossee (Yonahlossee salamander).